The primary structure comprises 334 residues: MDGVIVYCLNALVKHGEEINHIKNDFMIKPCCERVCEKVKNVHIGGQSKNNTVIADLPYMDNAVSDVCNSLYKKNVSRISRFANLIKIDDDDKTPTGVYNYFKPKDVIPVIISIGKDKDVCELLISSDISCACVELNSYHVAILPMDVSFFTKGNASLIILLFDFSIDAAPLLRSVTDNNVIISRHQRLHDELPSSNWFKFYISIKSDYCSILYMVVDGSVMHAIADNRTHAIISKNILDNTTINDECRCCYFEPQIRILDRDEMLNGSSCDMNRHCIMMNLPDVGKFGSSMLGKYEPDMIKIALSVAGNLIRNRDYIPGRRGYSYYVYGIASR.

The protein belongs to the orthopoxvirus OPG181 family.

The protein is Protein OPG181 (OPG181) of Bos taurus (Bovine).